Consider the following 264-residue polypeptide: ATP synthase subunit b 1 (264 aa).

Residues 2-22 form a helical membrane-spanning segment; that stretch reads LFDWFTFWAQLLNFLILVWLL. The segment at 240-264 is disordered; the sequence is ASSALLDGPDDEMNEEEGHAGKDAD. The span at 255-264 shows a compositional bias: basic and acidic residues; sequence EEGHAGKDAD.

Belongs to the ATPase B chain family. F-type ATPases have 2 components, F(1) - the catalytic core - and F(0) - the membrane proton channel. F(1) has five subunits: alpha(3), beta(3), gamma(1), delta(1), epsilon(1). F(0) has four main subunits: a(1), b(2) and c(10-14). The alpha and beta chains form an alternating ring which encloses part of the gamma chain. F(1) is attached to F(0) by a central stalk formed by the gamma and epsilon chains, while a peripheral stalk is formed by the delta and b chains.

Its subcellular location is the cell inner membrane. Its function is as follows. F(1)F(0) ATP synthase produces ATP from ADP in the presence of a proton or sodium gradient. F-type ATPases consist of two structural domains, F(1) containing the extramembraneous catalytic core and F(0) containing the membrane proton channel, linked together by a central stalk and a peripheral stalk. During catalysis, ATP synthesis in the catalytic domain of F(1) is coupled via a rotary mechanism of the central stalk subunits to proton translocation. Component of the F(0) channel, it forms part of the peripheral stalk, linking F(1) to F(0). This is ATP synthase subunit b 1 from Chlorobium luteolum (strain DSM 273 / BCRC 81028 / 2530) (Pelodictyon luteolum).